Reading from the N-terminus, the 455-residue chain is Protein chibby homolog 2 (455 aa).

8 positions are modified to phosphoserine: S41, S86, S89, S97, S124, S144, S148, and S150. Residues 160-197 adopt a coiled-coil conformation; that stretch reads KRLAKECLLQENKTLREENRALREENRMLRKENKILQV. Residues S211 and S225 each carry the phosphoserine modification. Positions 240-266 form a coiled coil; it reads GRENSTLQLLREENRALQQLLEQRKAY. Residues 267–318 are disordered; it reads WAQPDEKAASTEEIKPISSPHEEPHGLLPDPGPGLPSPFEEPKGLPAPPDDS. Basic and acidic residues predominate over residues 270-291; that stretch reads PDEKAASTEEIKPISSPHEEPH. Phosphoserine occurs at positions 276 and 332. Residues 350 to 421 are a coiled coil; the sequence is SQSLELLREM…KLKLQQKLVI (72 aa).

Belongs to the chibby family. SPERT subfamily. In terms of assembly, homodimer. Binds to NEK1.

The protein is Protein chibby homolog 2 (CBY2) of Bos taurus (Bovine).